The following is a 347-amino-acid chain: Quinolinate synthase (347 aa).

Residues H47 and S68 each coordinate iminosuccinate. [4Fe-4S] cluster is bound at residue C113. Iminosuccinate is bound by residues 139 to 141 (YAN) and S156. C200 is a [4Fe-4S] cluster binding site. Iminosuccinate contacts are provided by residues 226–228 (HPE) and T243. C297 contributes to the [4Fe-4S] cluster binding site.

Belongs to the quinolinate synthase family. Type 1 subfamily. It depends on [4Fe-4S] cluster as a cofactor.

It localises to the cytoplasm. The enzyme catalyses iminosuccinate + dihydroxyacetone phosphate = quinolinate + phosphate + 2 H2O + H(+). It participates in cofactor biosynthesis; NAD(+) biosynthesis; quinolinate from iminoaspartate: step 1/1. Its function is as follows. Catalyzes the condensation of iminoaspartate with dihydroxyacetone phosphate to form quinolinate. The protein is Quinolinate synthase of Salmonella agona (strain SL483).